The primary structure comprises 365 residues: Centrosomal protein of 41 kDa B (365 aa).

Residues 1-14 show a composition bias toward basic and acidic residues; it reads MSAKRSIGDPEILK. Disordered regions lie at residues 1 to 23 and 104 to 123; these read MSAK…NQKY and EFLT…SKSP. The Rhodanese domain occupies 177 to 274; it reads EDCPFLLLDV…ISQKFPQGLT (98 aa). The interval 329-365 is disordered; it reads TSTPSRLRLDSRNSKVPSSASSARSLSSTSSHSKPWK. The span at 342–365 shows a compositional bias: low complexity; that stretch reads SKVPSSASSARSLSSTSSHSKPWK.

The protein belongs to the CEP41 family.

It localises to the cytoplasm. The protein resides in the cytoskeleton. Its subcellular location is the microtubule organizing center. It is found in the centrosome. The protein localises to the cell projection. It localises to the cilium. The protein resides in the cilium basal body. In terms of biological role, required during ciliogenesis for tubulin glutamylation in cilium. Probably acts by participating in the transport of tubulin polyglutamylases between the basal body and the cilium. The chain is Centrosomal protein of 41 kDa B (cep41-b) from Xenopus laevis (African clawed frog).